The following is a 262-amino-acid chain: Acyl-[acyl-carrier-protein]--UDP-N-acetylglucosamine O-acyltransferase (262 aa).

Belongs to the transferase hexapeptide repeat family. LpxA subfamily. Homotrimer.

The protein localises to the cytoplasm. The catalysed reaction is a (3R)-hydroxyacyl-[ACP] + UDP-N-acetyl-alpha-D-glucosamine = a UDP-3-O-[(3R)-3-hydroxyacyl]-N-acetyl-alpha-D-glucosamine + holo-[ACP]. It functions in the pathway glycolipid biosynthesis; lipid IV(A) biosynthesis; lipid IV(A) from (3R)-3-hydroxytetradecanoyl-[acyl-carrier-protein] and UDP-N-acetyl-alpha-D-glucosamine: step 1/6. In terms of biological role, involved in the biosynthesis of lipid A, a phosphorylated glycolipid that anchors the lipopolysaccharide to the outer membrane of the cell. This Vibrio campbellii (strain ATCC BAA-1116) protein is Acyl-[acyl-carrier-protein]--UDP-N-acetylglucosamine O-acyltransferase.